A 324-amino-acid polypeptide reads, in one-letter code: Acetyl-coenzyme A carboxylase carboxyl transferase subunit alpha (324 aa).

The 255-residue stretch at 44-298 (RFQNQLVKLQ…KKELTEQLDS (255 aa)) folds into the CoA carboxyltransferase C-terminal domain.

The protein belongs to the AccA family. As to quaternary structure, acetyl-CoA carboxylase is a heterohexamer composed of biotin carboxyl carrier protein (accB), biotin carboxylase (accC) and two subunits each of ACCase subunit alpha (accA) and ACCase subunit beta (accD).

The protein resides in the plastid. It is found in the chloroplast. The enzyme catalyses N(6)-carboxybiotinyl-L-lysyl-[protein] + acetyl-CoA = N(6)-biotinyl-L-lysyl-[protein] + malonyl-CoA. It participates in lipid metabolism; malonyl-CoA biosynthesis; malonyl-CoA from acetyl-CoA: step 1/1. Component of the acetyl coenzyme A carboxylase (ACC) complex. First, biotin carboxylase catalyzes the carboxylation of biotin on its carrier protein (BCCP) and then the CO(2) group is transferred by the carboxyltransferase to acetyl-CoA to form malonyl-CoA. This chain is Acetyl-coenzyme A carboxylase carboxyl transferase subunit alpha, found in Pyropia yezoensis (Susabi-nori).